The primary structure comprises 179 residues: MINNNKWLVVGLITSCHGINGQLKVKSLSDFEERFLKPGIRWLQKENEPPSKIELTSGFKQPGKETFIIKLQGINNRNQAERLKKCKILVKTNKLPKLKKEEFHLLELINLEVKTLENEELKIIGKVINLENEKNNLLVVELFKNKKKVLIPFVKEIVPLVDIKNNFLIINPPNGLLDL.

The PRC barrel domain occupies 100-176 (KEEFHLLELI…FLIINPPNGL (77 aa)).

It belongs to the RimM family. As to quaternary structure, binds ribosomal protein uS19.

It localises to the cytoplasm. Functionally, an accessory protein needed during the final step in the assembly of 30S ribosomal subunit, possibly for assembly of the head region. Essential for efficient processing of 16S rRNA. May be needed both before and after RbfA during the maturation of 16S rRNA. It has affinity for free ribosomal 30S subunits but not for 70S ribosomes. The chain is Ribosome maturation factor RimM from Prochlorococcus marinus (strain MIT 9312).